A 694-amino-acid chain; its full sequence is Beta-galactosidase (694 aa).

A disordered region spans residues 1 to 31 (MGKRFPSGWFSPRVHPPRRQRSPMTNQATPG). Positions 22-31 (SPMTNQATPG) are enriched in polar residues. 2 residues coordinate substrate: arginine 144 and asparagine 182. The active-site Proton donor is glutamate 183. Residue glutamate 341 is the Nucleophile of the active site. Residues tryptophan 349 and 389–392 (EKFH) contribute to the substrate site.

Belongs to the glycosyl hydrolase 42 family. In terms of assembly, homotrimer.

It catalyses the reaction Hydrolysis of terminal non-reducing beta-D-galactose residues in beta-D-galactosides.. With respect to regulation, strongly inhibited by glucose. No activity is lost during treatment with 100 mM EDTA after 2 hours. Activity not considerably affected by metal ions (5 mM), including Na(+), K(+), Mg(2+), Co(2+) and Ca(2+). Completely inhibited by Cu(2+) and Zn(2+) (5 mM) and is strongly inhibited by Mn(2+) (11%), Fe(2+) (25%) and Ni(2+) (38%) in comparison with the activity in the absence of cations (100%). Activity not affected by dithiothreitol, beta-mercaptoethanol and L-cysteine whereas reduced glutathione almost completely inactivates it. With ONPG as substrate, the addition of ethanol up to 20% still slightly stimulates activity. The activity increases up to 120% in the presence of 8% v/v ethanol at pH 5.5. In terms of biological role, hydrolyzes p-nitrophenyl-beta-D-galactopyranoside (PNPG), o-nitrophenyl-beta-D-galactopyranoside (ONPG) and chromogen 5-bromo-4-chloro-3-indolyl-beta-D-galactopyranoside (X-gal), with highest activity against PNPG. Also acts on p-nitrophenyl-beta-D-glucopyranoside (PNPGlu) and o-nitrophenyl-beta-D-glucopyranoside (ONPGlu), but with significantly lower activity. The protein is Beta-galactosidase of Arthrobacter sp.